The chain runs to 2153 residues: Non-reducing polyketide synthase albA (2153 aa).

The N-terminal acylcarrier protein transacylase domain (SAT) stretch occupies residues 8–244 (YLFGDQTSDI…VKAPIHGPYH (237 aa)). Residues 375–806 (NSKIAIIGMS…GGNTALLLED (432 aa)) form the Ketosynthase family 3 (KS3) domain. Active-site for beta-ketoacyl synthase activity residues include Cys547, His682, and His724. The segment at 912–1232 (FVFTGQGAQY…LASLHLAGID (321 aa)) is malonyl-CoA:ACP transacylase (MAT) domain. Ser1001 serves as the catalytic For acyl/malonyl transferase activity. Residues 1286–1425 (HEYLTTAAQK…CTVRFFDCAA (140 aa)) are N-terminal hotdog fold. The 313-residue stretch at 1286-1598 (HEYLTTAAQK…FQALSRKILD (313 aa)) folds into the PKS/mFAS DH domain. The segment at 1290–1603 (TTAAQKVIET…RKILDTVLPP (314 aa)) is product template (PT) domain. His1326 serves as the catalytic Proton acceptor; for dehydratase activity. Positions 1452–1598 (DAHRLGRGMV…FQALSRKILD (147 aa)) are C-terminal hotdog fold. The active-site Proton donor; for dehydratase activity is the Asp1511. The tract at residues 1608–1643 (KGPARPAASAQKAAPAAAASKSRASAPAPAKPAAKP) is disordered. The span at 1610–1643 (PARPAASAQKAAPAAAASKSRASAPAPAKPAAKP) shows a compositional bias: low complexity. Positions 1643-1720 (PSAPSLVKRA…DFKQFLAPMS (78 aa)) constitute a Carrier 1 domain. Ser1680 is modified (O-(pantetheine 4'-phosphoryl)serine). The interval 1720 to 1765 (SQGEASDGSTSDPESSSSFNGGSSTDESSAGSPVSSPPNEKVTQVE) is disordered. A compositionally biased stretch (low complexity) spans 1725–1748 (SDGSTSDPESSSSFNGGSSTDESS). The segment covering 1749–1765 (AGSPVSSPPNEKVTQVE) has biased composition (polar residues). The Carrier 2 domain occupies 1764 to 1841 (VEQHATIKEI…DVEDALGLKP (78 aa)). Ser1801 carries the post-translational modification O-(pantetheine 4'-phosphoryl)serine. The claisen cyclase domain stretch occupies residues 1879–2151 (SPHPRSTSIL…ELGSFIGNAM (273 aa)). The For Claisen cyclase activity role is filled by Ser1969.

It catalyses the reaction 6 malonyl-CoA + acetyl-CoA + 6 H(+) = naphtopyrone YWA1 + 6 CO2 + 7 CoA + H2O. Its pathway is secondary metabolite biosynthesis. In terms of biological role, non-reducing polyketide synthase; part of the gene cluster that mediates the biosynthesis of aurasperone B, a dimeric gamma-naphthopyrone. The first step in the biosynthesis of aurasperone B is the production of gamma-naphthopyrone precursor YWA1 by the non-reducing polyketide synthase albA, via condensation of one acetyl-CoA starter unit with 6 malonyl-CoA units. YWA1 is then methylated by aunE at position C-6 to yield foncesin which is further methylated at position C-8 by aunD to produce fonsecin B. A key enzyme in the biosynthetic pathway is the cytochrome P450 monooxygenase aunB which catalyzes the oxidative dimerization of fonsecin B to aurasperone B. AunB also catalyzes the oxidative dimerization of rubrofusarin B into aurasperone A. This is Non-reducing polyketide synthase albA from Aspergillus niger (strain ATCC MYA-4892 / CBS 513.88 / FGSC A1513).